The sequence spans 322 residues: Cytochrome f (322 aa).

The signal sequence occupies residues 1 to 35 (MQNRNIFSWVKEQTTRSISVSIMILIYVITWTSIS). Heme is bound by residues tyrosine 38, cysteine 58, cysteine 61, and histidine 62. The helical transmembrane segment at 288–308 (VQGLFFFFASVILAQIFLVLK) threads the bilayer.

Belongs to the cytochrome f family. As to quaternary structure, the 4 large subunits of the cytochrome b6-f complex are cytochrome b6, subunit IV (17 kDa polypeptide, petD), cytochrome f and the Rieske protein, while the 4 small subunits are PetG, PetL, PetM and PetN. The complex functions as a dimer. Requires heme as cofactor.

It localises to the plastid. The protein localises to the chloroplast thylakoid membrane. Component of the cytochrome b6-f complex, which mediates electron transfer between photosystem II (PSII) and photosystem I (PSI), cyclic electron flow around PSI, and state transitions. This chain is Cytochrome f, found in Nandina domestica (Heavenly bamboo).